A 243-amino-acid polypeptide reads, in one-letter code: Pyridoxine 5'-phosphate synthase (243 aa).

A 3-amino-2-oxopropyl phosphate-binding site is contributed by asparagine 9. Aspartate 11–histidine 12 contacts 1-deoxy-D-xylulose 5-phosphate. Arginine 20 serves as a coordination point for 3-amino-2-oxopropyl phosphate. Catalysis depends on histidine 45, which acts as the Proton acceptor. 2 residues coordinate 1-deoxy-D-xylulose 5-phosphate: arginine 47 and histidine 52. The Proton acceptor role is filled by glutamate 72. Residue threonine 102 coordinates 1-deoxy-D-xylulose 5-phosphate. Residue histidine 193 is the Proton donor of the active site. 3-amino-2-oxopropyl phosphate is bound by residues glycine 194 and glycine 215–histidine 216.

It belongs to the PNP synthase family. Homooctamer; tetramer of dimers.

The protein localises to the cytoplasm. The enzyme catalyses 3-amino-2-oxopropyl phosphate + 1-deoxy-D-xylulose 5-phosphate = pyridoxine 5'-phosphate + phosphate + 2 H2O + H(+). Its pathway is cofactor biosynthesis; pyridoxine 5'-phosphate biosynthesis; pyridoxine 5'-phosphate from D-erythrose 4-phosphate: step 5/5. Catalyzes the complicated ring closure reaction between the two acyclic compounds 1-deoxy-D-xylulose-5-phosphate (DXP) and 3-amino-2-oxopropyl phosphate (1-amino-acetone-3-phosphate or AAP) to form pyridoxine 5'-phosphate (PNP) and inorganic phosphate. The chain is Pyridoxine 5'-phosphate synthase from Pectobacterium atrosepticum (strain SCRI 1043 / ATCC BAA-672) (Erwinia carotovora subsp. atroseptica).